A 216-amino-acid chain; its full sequence is Protein-L-isoaspartate O-methyltransferase (216 aa).

Ser65 is an active-site residue.

The protein belongs to the methyltransferase superfamily. L-isoaspartyl/D-aspartyl protein methyltransferase family.

The protein resides in the cytoplasm. The enzyme catalyses [protein]-L-isoaspartate + S-adenosyl-L-methionine = [protein]-L-isoaspartate alpha-methyl ester + S-adenosyl-L-homocysteine. Catalyzes the methyl esterification of L-isoaspartyl residues in peptides and proteins that result from spontaneous decomposition of normal L-aspartyl and L-asparaginyl residues. It plays a role in the repair and/or degradation of damaged proteins. This is Protein-L-isoaspartate O-methyltransferase from Chlorobium phaeobacteroides (strain DSM 266 / SMG 266 / 2430).